We begin with the raw amino-acid sequence, 178 residues long: Large ribosomal subunit protein uL6 (178 aa).

It belongs to the universal ribosomal protein uL6 family. Part of the 50S ribosomal subunit.

Its function is as follows. This protein binds to the 23S rRNA, and is important in its secondary structure. It is located near the subunit interface in the base of the L7/L12 stalk, and near the tRNA binding site of the peptidyltransferase center. In Streptococcus pneumoniae (strain JJA), this protein is Large ribosomal subunit protein uL6.